A 310-amino-acid polypeptide reads, in one-letter code: tRNA methyltransferase 10 homolog B (310 aa).

Residues 55–94 (RKQRNWERRLEVKKSKRKEEKLRKKLNRQDKDVSDAQLSK) are a coiled coil. Residues 101–298 (TKERLEGARA…AGIPPGKGFV (198 aa)) enclose the SAM-dependent MTase TRM10-type domain.

The protein belongs to the class IV-like SAM-binding methyltransferase superfamily. TRM10 family.

It carries out the reaction guanosine(9) in tRNA + S-adenosyl-L-methionine = N(1)-methylguanosine(9) in tRNA + S-adenosyl-L-homocysteine + H(+). In terms of biological role, S-adenosyl-L-methionine-dependent guanine N(1)-methyltransferase that catalyzes the formation of N(1)-methylguanine at position 9 (m1G9) in tRNAs. Probably not able to catalyze formation of N(1)-methyladenine at position 9 (m1A9) in tRNAs. The polypeptide is tRNA methyltransferase 10 homolog B (trmt10b) (Danio rerio (Zebrafish)).